The primary structure comprises 100 residues: Aspartyl/glutamyl-tRNA(Asn/Gln) amidotransferase subunit C (100 aa).

Belongs to the GatC family. In terms of assembly, heterotrimer of A, B and C subunits.

It catalyses the reaction L-glutamyl-tRNA(Gln) + L-glutamine + ATP + H2O = L-glutaminyl-tRNA(Gln) + L-glutamate + ADP + phosphate + H(+). The catalysed reaction is L-aspartyl-tRNA(Asn) + L-glutamine + ATP + H2O = L-asparaginyl-tRNA(Asn) + L-glutamate + ADP + phosphate + 2 H(+). Functionally, allows the formation of correctly charged Asn-tRNA(Asn) or Gln-tRNA(Gln) through the transamidation of misacylated Asp-tRNA(Asn) or Glu-tRNA(Gln) in organisms which lack either or both of asparaginyl-tRNA or glutaminyl-tRNA synthetases. The reaction takes place in the presence of glutamine and ATP through an activated phospho-Asp-tRNA(Asn) or phospho-Glu-tRNA(Gln). This is Aspartyl/glutamyl-tRNA(Asn/Gln) amidotransferase subunit C from Streptococcus sanguinis (strain SK36).